The primary structure comprises 452 residues: Mitochondrial import inner membrane translocase subunit TIM44 (452 aa).

Thr128 is modified (phosphothreonine). ATP is bound at residue 166-173; sequence SGEKLGKT. An N6-succinyllysine modification is found at Lys177. Ser180 is modified (phosphoserine). An N6-succinyllysine modification is found at Lys217.

This sequence belongs to the Tim44 family. In terms of assembly, probable component of the PAM complex at least composed of a mitochondrial HSP70 protein, GRPEL1 or GRPEL2, TIMM44, TIMM16/PAM16 and TIMM14/DNAJC19. The complex interacts with the TIMM23 component of the TIM23 complex. Interacts with SLC25A4/ANT1 and SLC25A5/ANT2; leading to inhibit the presequence translocase TIMM23, thereby promoting stabilization of PINK1.

It is found in the mitochondrion inner membrane. Its function is as follows. Essential component of the PAM complex, a complex required for the translocation of transit peptide-containing proteins from the inner membrane into the mitochondrial matrix in an ATP-dependent manner. Recruits mitochondrial HSP70 to drive protein translocation into the matrix using ATP as an energy source. This chain is Mitochondrial import inner membrane translocase subunit TIM44 (Timm44), found in Mus musculus (Mouse).